Consider the following 1315-residue polypeptide: Chaoptin (1315 aa).

A signal peptide spans 1 to 29 (MGLEFFFKFGYAFLTITLMIMIWMSLARA). A glycan (N-linked (GlcNAc...) (high mannose) asparagine; alternate) is linked at Asn-77. N-linked (GlcNAc...) (paucimannose) asparagine; alternate glycosylation is present at Asn-77. LRR repeat units follow at residues 80 to 101 (KVFM…FLQS), 103 to 124 (GMYR…AFTG), 128 to 149 (SLWE…SLRH), 152 to 173 (KLRH…SFRG), 177 to 198 (SLQT…SFSG), 201 to 222 (ILET…VFVD), 226 to 247 (RLTR…ALGP), 250 to 271 (SLRT…ETYE), and 279 to 300 (NLDN…SFKY). The N-linked (GlcNAc...) (paucimannose) asparagine; alternate glycan is linked to Asn-267. N-linked (GlcNAc...) (complex) asparagine; alternate glycosylation is present at Asn-267. A glycan (N-linked (GlcNAc...) (high mannose) asparagine; alternate) is linked at Asn-305. N-linked (GlcNAc...) (paucimannose) asparagine; alternate glycosylation occurs at Asn-305. LRR repeat units follow at residues 326–347 (RIRE…AFDS), 351–372 (SLQI…LFNN), 375–396 (VLRV…ETFN), 401–424 (TLLK…RNMT), 477–498 (GLKR…AFHE), 527–548 (SLQE…SFHF), 551–572 (NLRL…TFQG), 577–598 (KLEE…TFFD), 601–622 (ALRK…AFMN), 625–646 (ELEY…SFQN), 649–670 (KLEI…YFDQ), 676–696 (NLNV…SSWS), 708–729 (NIKI…YFRP), 733–754 (SLTH…VFGN), 757–778 (HLQW…AFKN), 781–802 (QLQL…IFKP), 805–826 (GLRI…LFYN), 828–849 (GMEK…SLSS), 854–875 (TLCE…DLSN), 879–900 (SLRY…VFAT), 903–924 (KLAV…SFMG), 928–948 (SLIK…IRLK), 949–970 (YLRE…LAHN), 973–994 (NLRM…TQAL), 996–1017 (HLRR…SFDG), 1021–1044 (DLEM…DSLP), and 1045–1066 (HLRS…PHLL). An N-linked (GlcNAc...) (high mannose) asparagine glycan is attached at Asn-361. Asn-422 carries N-linked (GlcNAc...) asparagine glycosylation. Residue Asn-680 is glycosylated (N-linked (GlcNAc...) (high mannose) asparagine). An N-linked (GlcNAc...) (high mannose) asparagine; alternate glycan is attached at Asn-692. The N-linked (GlcNAc...) (paucimannose) asparagine; alternate glycan is linked to Asn-692. N-linked (GlcNAc...) (high mannose) asparagine glycosylation is present at Asn-718. An N-linked (GlcNAc...) asparagine glycan is attached at Asn-746. An N-linked (GlcNAc...) (high mannose) asparagine glycan is attached at Asn-936. Asn-970 is a glycosylation site (N-linked (GlcNAc...) (paucimannose) asparagine). Asn-1012 carries N-linked (GlcNAc...) (complex) asparagine glycosylation. Asn-1122, Asn-1152, and Asn-1171 each carry an N-linked (GlcNAc...) (high mannose) asparagine glycan. The LRRCT domain occupies 1211–1274 (TDLNCDCDLG…DDLRETRCEN (64 aa)).

Belongs to the chaoptin family. In terms of tissue distribution, expressed in photoreceptor cells and their axons in the adult retina, the ocellus and larval photoreceptor organ.

The protein resides in the cell membrane. Required for photoreceptor cell morphogenesis. Mediates homophilic cellular adhesion. This Drosophila melanogaster (Fruit fly) protein is Chaoptin (chp).